Here is a 1018-residue protein sequence, read N- to C-terminus: UPF0182 protein Francci3_3781 (1018 aa).

The next 7 helical transmembrane spans lie at 13 to 33 (TKVLVPVLLVIVLAITIIAIF), 60 to 80 (ILLFVLFGVVMAIIVGTNIVL), 109 to 129 (MLLILLAVTTLFGLAAGLSAA), 167 to 187 (FLLGFLLTAVLLSLLVTLLTH), 208 to 228 (AHISVLLGLLALLKAWAYYLD), 250 to 270 (AVLPAKLILLFISLACAVLFI), and 283 to 303 (LGAGILVLSSVVIGGIYPAIV). Low complexity-rich tracts occupy residues 886-896 (TTDAGQDGTPA) and 960-980 (SSPAATPPAATATRAGASVPA). 2 disordered regions span residues 886 to 920 (TTDAGQDGTPAPRSGQGGAGVPPPGQTALQDAVGD) and 960 to 1018 (SSPA…PAPG). The span at 981-995 (SPVPASPAAKPPAPS) shows a compositional bias: pro residues.

The protein belongs to the UPF0182 family.

Its subcellular location is the cell membrane. The sequence is that of UPF0182 protein Francci3_3781 from Frankia casuarinae (strain DSM 45818 / CECT 9043 / HFP020203 / CcI3).